Consider the following 151-residue polypeptide: Deoxyuridine 5'-triphosphate nucleotidohydrolase (151 aa).

Substrate is bound by residues 70–72 (RSG), Asn83, 87–89 (LID), and Met97.

Belongs to the dUTPase family. The cofactor is Mg(2+).

It catalyses the reaction dUTP + H2O = dUMP + diphosphate + H(+). It participates in pyrimidine metabolism; dUMP biosynthesis; dUMP from dCTP (dUTP route): step 2/2. Its function is as follows. This enzyme is involved in nucleotide metabolism: it produces dUMP, the immediate precursor of thymidine nucleotides and it decreases the intracellular concentration of dUTP so that uracil cannot be incorporated into DNA. This chain is Deoxyuridine 5'-triphosphate nucleotidohydrolase, found in Stutzerimonas stutzeri (strain A1501) (Pseudomonas stutzeri).